An 84-amino-acid polypeptide reads, in one-letter code: Large ribosomal subunit protein bL27 (84 aa).

It belongs to the bacterial ribosomal protein bL27 family.

The polypeptide is Large ribosomal subunit protein bL27 (Buchnera aphidicola subsp. Acyrthosiphon pisum (strain Tuc7)).